The sequence spans 335 residues: Phosphate acyltransferase (335 aa).

The protein belongs to the PlsX family. As to quaternary structure, homodimer. Probably interacts with PlsY.

It localises to the cytoplasm. The catalysed reaction is a fatty acyl-[ACP] + phosphate = an acyl phosphate + holo-[ACP]. The protein operates within lipid metabolism; phospholipid metabolism. Catalyzes the reversible formation of acyl-phosphate (acyl-PO(4)) from acyl-[acyl-carrier-protein] (acyl-ACP). This enzyme utilizes acyl-ACP as fatty acyl donor, but not acyl-CoA. The chain is Phosphate acyltransferase from Streptococcus equi subsp. zooepidemicus (strain MGCS10565).